A 165-amino-acid chain; its full sequence is Shikimate kinase (165 aa).

11 to 16 (GAGKTT) lines the ATP pocket. Thr15 is a binding site for Mg(2+). Residues Asp33, Arg57, and Gly78 each coordinate substrate. Residue Arg116 coordinates ATP. Arg134 serves as a coordination point for substrate.

It belongs to the shikimate kinase family. As to quaternary structure, monomer. It depends on Mg(2+) as a cofactor.

Its subcellular location is the cytoplasm. It catalyses the reaction shikimate + ATP = 3-phosphoshikimate + ADP + H(+). It participates in metabolic intermediate biosynthesis; chorismate biosynthesis; chorismate from D-erythrose 4-phosphate and phosphoenolpyruvate: step 5/7. Functionally, catalyzes the specific phosphorylation of the 3-hydroxyl group of shikimic acid using ATP as a cosubstrate. The polypeptide is Shikimate kinase (Bacillus cereus (strain G9842)).